A 101-amino-acid chain; its full sequence is Small ribosomal subunit protein uS14 (101 aa).

Belongs to the universal ribosomal protein uS14 family. As to quaternary structure, part of the 30S ribosomal subunit. Contacts proteins S3 and S10.

In terms of biological role, binds 16S rRNA, required for the assembly of 30S particles and may also be responsible for determining the conformation of the 16S rRNA at the A site. This is Small ribosomal subunit protein uS14 from Pseudomonas syringae pv. tomato (strain ATCC BAA-871 / DC3000).